The primary structure comprises 363 residues: Insulin gene enhancer protein ISL-3 (363 aa).

LIM zinc-binding domains follow at residues 27–80 (CVGC…CKRD) and 89–143 (CAKC…RADH). The homeobox DNA-binding region spans 191–250 (TTRVRTVLNEKQLHTLRTCYNANPRPDALMREQLVEMTGLSPRVIRVWFQNKRCKDKKRS). The tract at residues 328-363 (FSESGSLGNSSGSDVTSLSSHLPDTPNSMVPSPVET) is disordered. Low complexity predominate over residues 329–340 (SESGSLGNSSGS). Polar residues predominate over residues 341-363 (DVTSLSSHLPDTPNSMVPSPVET).

The protein resides in the nucleus. Functionally, binds to one of the cis-acting domain of the insulin gene enhancer. May be involved in subtype specialization of primary motoneurons. In Oncorhynchus tshawytscha (Chinook salmon), this protein is Insulin gene enhancer protein ISL-3 (isl3).